The primary structure comprises 156 residues: Probable cyclic pyranopterin monophosphate synthase (156 aa).

Residues 73 to 75 and 109 to 110 contribute to the substrate site; these read LCH and ME. Aspartate 124 is a catalytic residue.

This sequence belongs to the MoaC family. Homohexamer; trimer of dimers.

The enzyme catalyses (8S)-3',8-cyclo-7,8-dihydroguanosine 5'-triphosphate = cyclic pyranopterin phosphate + diphosphate. It functions in the pathway cofactor biosynthesis; molybdopterin biosynthesis. Its function is as follows. Catalyzes the conversion of (8S)-3',8-cyclo-7,8-dihydroguanosine 5'-triphosphate to cyclic pyranopterin monophosphate (cPMP). The sequence is that of Probable cyclic pyranopterin monophosphate synthase from Pyrococcus furiosus (strain ATCC 43587 / DSM 3638 / JCM 8422 / Vc1).